The chain runs to 209 residues: Kynurenine formamidase (209 aa).

Trp-20 provides a ligand contact to substrate. The Zn(2+) site is built by His-50, His-54, and Asp-56. The Proton donor/acceptor role is filled by His-60. Zn(2+) is bound by residues His-161 and Glu-173.

It belongs to the Cyclase 1 superfamily. KynB family. Homodimer. Zn(2+) is required as a cofactor.

It catalyses the reaction N-formyl-L-kynurenine + H2O = L-kynurenine + formate + H(+). Its pathway is amino-acid degradation; L-tryptophan degradation via kynurenine pathway; L-kynurenine from L-tryptophan: step 2/2. Its function is as follows. Catalyzes the hydrolysis of N-formyl-L-kynurenine to L-kynurenine, the second step in the kynurenine pathway of tryptophan degradation. This Bacillus cereus (strain ATCC 14579 / DSM 31 / CCUG 7414 / JCM 2152 / NBRC 15305 / NCIMB 9373 / NCTC 2599 / NRRL B-3711) protein is Kynurenine formamidase.